Reading from the N-terminus, the 283-residue chain is Pantothenate synthetase (283 aa).

An ATP-binding site is contributed by 30 to 37 (MGYLHDGH). His37 (proton donor) is an active-site residue. Residue Gln61 participates in (R)-pantoate binding. Beta-alanine is bound at residue Gln61. 147-150 (GKKD) provides a ligand contact to ATP. Gln153 contributes to the (R)-pantoate binding site. Residues Ile176 and 184–187 (MSSR) contribute to the ATP site.

Belongs to the pantothenate synthetase family. Homodimer.

Its subcellular location is the cytoplasm. The enzyme catalyses (R)-pantoate + beta-alanine + ATP = (R)-pantothenate + AMP + diphosphate + H(+). Its pathway is cofactor biosynthesis; (R)-pantothenate biosynthesis; (R)-pantothenate from (R)-pantoate and beta-alanine: step 1/1. Functionally, catalyzes the condensation of pantoate with beta-alanine in an ATP-dependent reaction via a pantoyl-adenylate intermediate. The sequence is that of Pantothenate synthetase from Geobacter sulfurreducens (strain ATCC 51573 / DSM 12127 / PCA).